The sequence spans 255 residues: Leucyl/phenylalanyl-tRNA--protein transferase (255 aa).

The protein belongs to the L/F-transferase family.

It localises to the cytoplasm. The catalysed reaction is N-terminal L-lysyl-[protein] + L-leucyl-tRNA(Leu) = N-terminal L-leucyl-L-lysyl-[protein] + tRNA(Leu) + H(+). The enzyme catalyses N-terminal L-arginyl-[protein] + L-leucyl-tRNA(Leu) = N-terminal L-leucyl-L-arginyl-[protein] + tRNA(Leu) + H(+). It carries out the reaction L-phenylalanyl-tRNA(Phe) + an N-terminal L-alpha-aminoacyl-[protein] = an N-terminal L-phenylalanyl-L-alpha-aminoacyl-[protein] + tRNA(Phe). Functionally, functions in the N-end rule pathway of protein degradation where it conjugates Leu, Phe and, less efficiently, Met from aminoacyl-tRNAs to the N-termini of proteins containing an N-terminal arginine or lysine. This chain is Leucyl/phenylalanyl-tRNA--protein transferase, found in Burkholderia pseudomallei (strain 668).